Reading from the N-terminus, the 209-residue chain is Rac-like GTP-binding protein ARAC9 (209 aa).

Residue 25 to 32 coordinates GTP; that stretch reads GDGAVGKT. Residues 47–55 carry the Effector region motif; it reads YVPTVFDNF. Residues 72 to 76 and 130 to 133 each bind GTP; these read DTAGQ and TKSD. Position 206 is a cysteine methyl ester (cysteine 206). Residue cysteine 206 is the site of S-geranylgeranyl cysteine attachment. A propeptide spans 207 to 209 (removed in mature form); the sequence is HVL.

This sequence belongs to the small GTPase superfamily. Rho family. In terms of assembly, interacts with SPK1.

The protein localises to the cytoplasm. Its subcellular location is the membrane. Functionally, inactive GDP-bound Rho GTPases reside in the cytosol, are found in a complex with Rho GDP-dissociation inhibitors (Rho GDIs), and are released from the GDI protein in order to translocate to membranes upon activation. In Arabidopsis thaliana (Mouse-ear cress), this protein is Rac-like GTP-binding protein ARAC9 (ARAC9).